We begin with the raw amino-acid sequence, 613 residues long: tRNA 5-methylaminomethyl-2-thiouridine biosynthesis bifunctional protein MnmC (613 aa).

Residues 1–225 (MKKAKLIFKD…KREMIKAYLE (225 aa)) are tRNA (mnm(5)s(2)U34)-methyltransferase. The segment at 252 to 613 (IGAGISSAVL…FLIRKLKKGL (362 aa)) is FAD-dependent cmnm(5)s(2)U34 oxidoreductase.

In the N-terminal section; belongs to the methyltransferase superfamily. tRNA (mnm(5)s(2)U34)-methyltransferase family. This sequence in the C-terminal section; belongs to the DAO family. The cofactor is FAD.

The protein localises to the cytoplasm. The catalysed reaction is 5-aminomethyl-2-thiouridine(34) in tRNA + S-adenosyl-L-methionine = 5-methylaminomethyl-2-thiouridine(34) in tRNA + S-adenosyl-L-homocysteine + H(+). Its function is as follows. Catalyzes the last two steps in the biosynthesis of 5-methylaminomethyl-2-thiouridine (mnm(5)s(2)U) at the wobble position (U34) in tRNA. Catalyzes the FAD-dependent demodification of cmnm(5)s(2)U34 to nm(5)s(2)U34, followed by the transfer of a methyl group from S-adenosyl-L-methionine to nm(5)s(2)U34, to form mnm(5)s(2)U34. This chain is tRNA 5-methylaminomethyl-2-thiouridine biosynthesis bifunctional protein MnmC, found in Campylobacter jejuni (strain RM1221).